The primary structure comprises 445 residues: Tol-Pal system protein TolB (445 aa).

The N-terminal stretch at 1 to 26 is a signal peptide; it reads MLNRRNFIRTTSALAASTALPGYAFG.

The protein belongs to the TolB family. The Tol-Pal system is composed of five core proteins: the inner membrane proteins TolA, TolQ and TolR, the periplasmic protein TolB and the outer membrane protein Pal. They form a network linking the inner and outer membranes and the peptidoglycan layer.

The protein localises to the periplasm. Part of the Tol-Pal system, which plays a role in outer membrane invagination during cell division and is important for maintaining outer membrane integrity. The sequence is that of Tol-Pal system protein TolB from Jannaschia sp. (strain CCS1).